Reading from the N-terminus, the 348-residue chain is Serpentine receptor class alpha-29 (348 aa).

Helical transmembrane passes span 28 to 48 (FILM…QTLW), 108 to 130 (FLYY…DRLF), 145 to 165 (GFIV…FWTF), 193 to 213 (INDS…FLYI), 246 to 266 (CIII…PSIF), and 280 to 300 (LILA…LIVI).

Belongs to the nematode receptor-like protein sra family.

It is found in the membrane. This is Serpentine receptor class alpha-29 (sra-29) from Caenorhabditis elegans.